Consider the following 352-residue polypeptide: C-C chemokine receptor type 5 (352 aa).

Topologically, residues 1–30 are extracellular; sequence MDYQTSTPLYDIDYGMSEPCQKLNVRQIAA. At Tyr-3 the chain carries Sulfotyrosine. Ser-6 is a glycosylation site (O-linked (GalNAc...) serine). Tyr-10 and Tyr-14 each carry sulfotyrosine. Intrachain disulfides connect Cys-20/Cys-269 and Cys-101/Cys-178. Residues 31-58 traverse the membrane as a helical segment; it reads RLLPPLYSLVFIFGFVGNMLVVLILINC. Topologically, residues 59 to 68 are cytoplasmic; it reads KKLKSMTDIY. Residues 69-89 form a helical membrane-spanning segment; that stretch reads LLNLAISDLLFIITIPFWAHY. At 90–102 the chain is on the extracellular side; it reads AADQWVFGNTMCQ. The chain crosses the membrane as a helical span at residues 103 to 124; it reads LFTGFYFIGYFGGIFFIILLTI. The Cytoplasmic segment spans residues 125–141; the sequence is DRYLAIVHAVFALKART. A helical membrane pass occupies residues 142 to 166; that stretch reads VTFGAATSVVTWVVAVFASLPGIIF. At 167 to 198 the chain is on the extracellular side; it reads TKSQKEGSRHTCSPHFPSSQYHFWKNFQTLKI. Residues 199-218 traverse the membrane as a helical segment; it reads VILGLVLPLLVMIVCYSGII. Residues 219–235 lie on the Cytoplasmic side of the membrane; that stretch reads KTLLRCRNEKKKHKAVR. Residues 236-260 traverse the membrane as a helical segment; sequence LIFVIMIVYFLFWAPYNIVLLLSTF. The Extracellular portion of the chain corresponds to 261–277; it reads QEFFGLNNCSGSNRLDQ. The chain crosses the membrane as a helical span at residues 278–301; sequence AMQVTETLGMTHCCINPIIYAFVG. Over 302–352 the chain is Cytoplasmic; it reads EKFRNYLLRFFRKYFASRFCKGCPVFQGEAPERVSSVYTRSTGEQEISVGL. S-palmitoyl cysteine attachment occurs at residues Cys-321 and Cys-324. Residues Ser-336, Ser-337, Ser-342, and Ser-349 each carry the phosphoserine; by BARK1 modification.

Belongs to the G-protein coupled receptor 1 family. Interacts with PRAF2. Efficient ligand binding to CCL3/MIP-1alpha and CCL4/MIP-1beta requires sulfation, O-glycosylation and sialic acid modifications. Glycosylation on Ser-6 is required for efficient binding of CCL4. Interacts with GRK2. Interacts with ARRB1 and ARRB2. Interacts with CNIH4. Interacts with S100A4; this interaction stimulates T-lymphocyte chemotaxis. Post-translationally, sulfated on at least 2 of the N-terminal tyrosines. Sulfation is required for efficient binding of the chemokines, CCL3 and CCL4. In terms of processing, O-glycosylated, but not N-glycosylated. Ser-6 appears to be the major site. Also sialylated glycans present which contribute to chemokine binding. Ser-17 may also be glycosylated and, if so, with small moieties such as a T-antigen. Palmitoylation in the C-terminal is important for cell surface expression. Post-translationally, phosphorylation on serine residues in the C-terminal is stimulated by binding CC chemokines especially by APO-RANTES.

The protein localises to the cell membrane. Receptor for a number of inflammatory CC-chemokines including CCL3/MIP-1-alpha, CCL4/MIP-1-beta and RANTES and subsequently transduces a signal by increasing the intracellular calcium ion level. May play a role in the control of granulocytic lineage proliferation or differentiation. Participates in T-lymphocyte migration to the infection site by acting as a chemotactic receptor. The chain is C-C chemokine receptor type 5 (CCR5) from Bos taurus (Bovine).